Reading from the N-terminus, the 312-residue chain is Carbonic anhydrase 4 (312 aa).

An N-terminal signal peptide occupies residues Met-1–Arg-18. The region spanning Ser-21–Gly-285 is the Alpha-carbonic anhydrase domain. 2 disulfides stabilise this stretch: Cys-24/Cys-36 and Cys-46/Cys-229. Residue Asn-33 is glycosylated (N-linked (GlcNAc...) asparagine). His-88 acts as the Proton donor/acceptor in catalysis. The Zn(2+) site is built by His-115, His-117, and His-140. Residues Asn-152 and Asn-195 are each glycosylated (N-linked (GlcNAc...) asparagine). Thr-225 to Thr-226 serves as a coordination point for substrate. N-linked (GlcNAc...) asparagine glycosylation is present at Asn-265. The GPI-anchor amidated serine moiety is linked to residue Ser-284. Positions Gly-285 to Arg-312 are cleaved as a propeptide — removed in mature form.

It belongs to the alpha-carbonic anhydrase family. Interacts with SLC4A4. It depends on Zn(2+) as a cofactor.

Its subcellular location is the cell membrane. It catalyses the reaction hydrogencarbonate + H(+) = CO2 + H2O. With respect to regulation, inhibited by acetazolamide. Its function is as follows. Catalyzes the reversible hydration of carbon dioxide into bicarbonate and protons and thus is essential to maintaining intracellular and extracellular pH. May stimulate the sodium/bicarbonate transporter activity of SLC4A4 that acts in pH homeostasis. It is essential for acid overload removal from the retina and retina epithelium, and acid release in the choriocapillaris in the choroid. The polypeptide is Carbonic anhydrase 4 (CA4) (Bos taurus (Bovine)).